Here is a 318-residue protein sequence, read N- to C-terminus: 2-keto-3-deoxygluconate permease (318 aa).

The next 10 helical transmembrane spans lie at 10 to 30, 42 to 62, 76 to 96, 105 to 125, 139 to 159, 163 to 183, 199 to 219, 224 to 244, 263 to 283, and 289 to 309; these read IPGGLMLVPLFLGALCNTFTP, GLITGTIPILAVWFFCMGASI, VLVVTKIATAWVVALIAGTFL, MLAGISVLALVAAMDMTNGGL, AGAFVLMSLESGPLMTMVILG, IATFEPQLFVGAVLPFLIGFA, VQTLIPFFAFALGNTINLSVI, FAGIFLGLLVIVVTGIPLILA, AGAAVATPLLIANMAPEFAPV, and ALVATSVIVTSVLVPIITALW.

The protein belongs to the KdgT transporter family.

It localises to the cell inner membrane. It carries out the reaction 2-dehydro-3-deoxy-D-gluconate(in) + H(+)(in) = 2-dehydro-3-deoxy-D-gluconate(out) + H(+)(out). Catalyzes the proton-dependent uptake of 2-keto-3-deoxygluconate (KDG) into the cell. The protein is 2-keto-3-deoxygluconate permease of Pectobacterium carotovorum subsp. carotovorum (Erwinia carotovora subsp. carotovora).